Consider the following 494-residue polypeptide: Alpha-amylase-related protein (494 aa).

The signal sequence occupies residues 1-20 (MIKFALALTLCLAGASLSLA). Pyrrolidone carboxylic acid is present on Q21. Cysteines 48 and 104 form a disulfide. Positions 118, 169, and 178 each coordinate Ca(2+). C157 and C171 form a disulfide bridge. Residue R206 participates in chloride binding. D208 functions as the Nucleophile in the catalytic mechanism. A Ca(2+)-binding site is contributed by H212. Residue E245 is the Proton donor of the active site. Chloride-binding residues include N308 and R343. Intrachain disulfides connect C376-C382, C418-C441, and C448-C460.

The protein belongs to the glycosyl hydrolase 13 family. As to quaternary structure, monomer. Requires Ca(2+) as cofactor. Chloride serves as cofactor.

The protein localises to the secreted. It carries out the reaction Endohydrolysis of (1-&gt;4)-alpha-D-glucosidic linkages in polysaccharides containing three or more (1-&gt;4)-alpha-linked D-glucose units.. This chain is Alpha-amylase-related protein (Amyrel), found in Drosophila auraria (Fruit fly).